We begin with the raw amino-acid sequence, 443 residues long: Glutamate-1-semialdehyde 2,1-aminomutase (443 aa).

The residue at position 272 (Lys272) is an N6-(pyridoxal phosphate)lysine.

The protein belongs to the class-III pyridoxal-phosphate-dependent aminotransferase family. HemL subfamily. As to quaternary structure, homodimer. It depends on pyridoxal 5'-phosphate as a cofactor.

It is found in the cytoplasm. It carries out the reaction (S)-4-amino-5-oxopentanoate = 5-aminolevulinate. The protein operates within porphyrin-containing compound metabolism; protoporphyrin-IX biosynthesis; 5-aminolevulinate from L-glutamyl-tRNA(Glu): step 2/2. It participates in porphyrin-containing compound metabolism; chlorophyll biosynthesis. This is Glutamate-1-semialdehyde 2,1-aminomutase from Chloroflexus aurantiacus (strain ATCC 29366 / DSM 635 / J-10-fl).